A 139-amino-acid polypeptide reads, in one-letter code: MAQMTVQIVTPDGLIYDHHAAFVSVKTIDGELGILPRHINTIAVLEVDQVKVRRVDDDKHIDWIAVNGGIIEIADNVITIVADSAERARDIDISRAERAKRRAELEIEEAHDKHLIDQERRAKIALQRAINRINVGTRI.

The protein belongs to the ATPase epsilon chain family. In terms of assembly, F-type ATPases have 2 components, CF(1) - the catalytic core - and CF(0) - the membrane proton channel. CF(1) has five subunits: alpha(3), beta(3), gamma(1), delta(1), epsilon(1). CF(0) has three main subunits: a, b and c.

Its subcellular location is the cell membrane. Functionally, produces ATP from ADP in the presence of a proton gradient across the membrane. In Streptococcus sanguinis, this protein is ATP synthase epsilon chain.